A 262-amino-acid chain; its full sequence is Flap endonuclease Xni (262 aa).

Position 105 (aspartate 105) interacts with Mg(2+). Residues 162-254 (ERSQFLDLMA…LKDFRVIDSL (93 aa)) enclose the 5'-3' exonuclease domain. K(+) is bound by residues leucine 172, alanine 173, proline 181, isoleucine 183, and isoleucine 186. An interaction with DNA region spans residues 185–190 (GIGPKS).

It belongs to the Xni family. Mg(2+) serves as cofactor. K(+) is required as a cofactor.

Its function is as follows. Has flap endonuclease activity. During DNA replication, flap endonucleases cleave the 5'-overhanging flap structure that is generated by displacement synthesis when DNA polymerase encounters the 5'-end of a downstream Okazaki fragment. The chain is Flap endonuclease Xni from Shewanella baltica (strain OS195).